Reading from the N-terminus, the 169-residue chain is Putative tRNA (cytidine(34)-2'-O)-methyltransferase (169 aa).

I79, G104, I125, and S133 together coordinate S-adenosyl-L-methionine.

The protein belongs to the class IV-like SAM-binding methyltransferase superfamily. RNA methyltransferase TrmH family. TrmL subfamily.

It localises to the cytoplasm. The enzyme catalyses cytidine(34) in tRNA + S-adenosyl-L-methionine = 2'-O-methylcytidine(34) in tRNA + S-adenosyl-L-homocysteine + H(+). The catalysed reaction is 5-carboxymethylaminomethyluridine(34) in tRNA(Leu) + S-adenosyl-L-methionine = 5-carboxymethylaminomethyl-2'-O-methyluridine(34) in tRNA(Leu) + S-adenosyl-L-homocysteine + H(+). Its function is as follows. Could methylate the ribose at the nucleotide 34 wobble position in tRNA. The chain is Putative tRNA (cytidine(34)-2'-O)-methyltransferase from Listeria innocua serovar 6a (strain ATCC BAA-680 / CLIP 11262).